Here is a 170-residue protein sequence, read N- to C-terminus: Lipoprotein signal peptidase (170 aa).

The next 3 helical transmembrane spans lie at 12–32 (WYWVVVLVFVADQLSKQWVLS), 67–87 (WQRWLFTFVAVGFSVVLSVWL), and 94–116 (MWRLNLAYTLVIGGALGNLIDRL). Active-site residues include Asp-123 and Asp-141. A helical membrane pass occupies residues 133–153 (HFPAFNIADSAICVGAALIIL).

This sequence belongs to the peptidase A8 family.

It localises to the cell inner membrane. The enzyme catalyses Release of signal peptides from bacterial membrane prolipoproteins. Hydrolyzes -Xaa-Yaa-Zaa-|-(S,diacylglyceryl)Cys-, in which Xaa is hydrophobic (preferably Leu), and Yaa (Ala or Ser) and Zaa (Gly or Ala) have small, neutral side chains.. It functions in the pathway protein modification; lipoprotein biosynthesis (signal peptide cleavage). Functionally, this protein specifically catalyzes the removal of signal peptides from prolipoproteins. The protein is Lipoprotein signal peptidase of Shewanella halifaxensis (strain HAW-EB4).